Reading from the N-terminus, the 300-residue chain is Probable protein phosphatase 2C 3 (300 aa).

In terms of domain architecture, PPM-type phosphatase spans 23–298 (IFAASEMQGW…DNMTTILVYL (276 aa)). Residues Asp-57, Gly-58, Asp-237, and Asp-289 each contribute to the Mn(2+) site.

The protein belongs to the PP2C family. Mg(2+) serves as cofactor. Requires Mn(2+) as cofactor.

Its subcellular location is the membrane. The enzyme catalyses O-phospho-L-seryl-[protein] + H2O = L-seryl-[protein] + phosphate. The catalysed reaction is O-phospho-L-threonyl-[protein] + H2O = L-threonyl-[protein] + phosphate. Its function is as follows. Enzyme with a broad specificity. This chain is Probable protein phosphatase 2C 3, found in Paramecium tetraurelia.